The sequence spans 215 residues: Large ribosomal subunit protein bL25 (215 aa).

Positions 160–215 are disordered; it reads GDLPLPEGSELVTEPEETVMSVVAPETEEEPDTEEDEEGEEDVEEESEEEEEESEE. Residues 185–215 show a composition bias toward acidic residues; the sequence is ETEEEPDTEEDEEGEEDVEEESEEEEEESEE.

The protein belongs to the bacterial ribosomal protein bL25 family. CTC subfamily. In terms of assembly, part of the 50S ribosomal subunit; part of the 5S rRNA/L5/L18/L25 subcomplex. Contacts the 5S rRNA. Binds to the 5S rRNA independently of L5 and L18.

Functionally, this is one of the proteins that binds to the 5S RNA in the ribosome where it forms part of the central protuberance. The sequence is that of Large ribosomal subunit protein bL25 from Natranaerobius thermophilus (strain ATCC BAA-1301 / DSM 18059 / JW/NM-WN-LF).